We begin with the raw amino-acid sequence, 84 residues long: Small ribosomal subunit protein bS20 (84 aa).

The span at 62 to 72 (KNKARRLKSRA) shows a compositional bias: basic residues. The tract at residues 62 to 84 (KNKARRLKSRAARWSNSATAASR) is disordered. The segment covering 75 to 84 (WSNSATAASR) has biased composition (polar residues).

This sequence belongs to the bacterial ribosomal protein bS20 family.

Binds directly to 16S ribosomal RNA. This is Small ribosomal subunit protein bS20 from Mycoplasmoides gallisepticum (strain R(low / passage 15 / clone 2)) (Mycoplasma gallisepticum).